A 309-amino-acid polypeptide reads, in one-letter code: Dihydroorotate dehydrogenase B (NAD(+)), catalytic subunit (309 aa).

FMN contacts are provided by residues Ser-21 and 45 to 46; that span reads KA. Substrate contacts are provided by residues Lys-45 and 69-73; that span reads NAIGL. FMN contacts are provided by Asn-99 and Asn-127. Asn-127 contributes to the substrate binding site. Cys-130 (nucleophile) is an active-site residue. The FMN site is built by Lys-165 and Ile-191. Residue 192–193 participates in substrate binding; sequence NT. FMN contacts are provided by residues Gly-217, 243 to 244, and 265 to 266; these read GG and GT.

It belongs to the dihydroorotate dehydrogenase family. Type 1 subfamily. As to quaternary structure, heterotetramer of 2 PyrK and 2 PyrD type B subunits. FMN serves as cofactor.

Its subcellular location is the cytoplasm. The enzyme catalyses (S)-dihydroorotate + NAD(+) = orotate + NADH + H(+). Its pathway is pyrimidine metabolism; UMP biosynthesis via de novo pathway; orotate from (S)-dihydroorotate (NAD(+) route): step 1/1. Catalyzes the conversion of dihydroorotate to orotate with NAD(+) as electron acceptor. In Exiguobacterium sibiricum (strain DSM 17290 / CCUG 55495 / CIP 109462 / JCM 13490 / 255-15), this protein is Dihydroorotate dehydrogenase B (NAD(+)), catalytic subunit (pyrD).